Consider the following 340-residue polypeptide: CRISPR system Cmr subunit Cmr6 (340 aa).

It belongs to the CRISPR system Cmr6 family. In terms of assembly, part of the type III-B Cmr ribonucleoprotein (RNP) complex, an elongated RNP with Cmr2 and Cmr3 as the base, with Cmr4 and Cmr5 forming a helical core along the mature crRNA (39 or 45 nt in length), while the complex is capped by Cmr6 and Cmr1. The 5' end of the crRNA is bound to Cmr2 and Cmr3, while Cmr6 and a Cmr1 subunit (Cmr1-1 or Cmr1-2) cap the 3' end of the crRNA. The target RNA lies antiparallel to the crRNA, with its 5' end near Cmr1 and Cmr6 and its 3' end near Cmr2 and Cmr3; major target cleavage occurs nears the junction of Cmr1/Cmr6 and Cmr4/Cmr, with minor cleavage occurring at 6 nt intervals which coincide with the proposed spacing of Cmr4 subunits. Interacts with Cmr4 and Cmr5.

The protein resides in the cytoplasm. In terms of biological role, CRISPR (clustered regularly interspaced short palindromic repeat), is an adaptive immune system that provides protection against mobile genetic elements (viruses, transposable elements and conjugative plasmids). CRISPR clusters contain sequences complementary to antecedent mobile elements and target invading nucleic acids. CRISPR clusters are transcribed and processed into CRISPR RNA (crRNA), formerly called psiRNA (prokaryotic silencing) in this organism. Part of the Cmr ribonucleoprotein complex which has divalent cation-dependent endoribonuclease activity specific for ssRNA complementary to the crRNA (target RNA), generating 5' hydroxy- and 3' phosphate or 2'-3' cyclic phosphate termini. Cmr4 is probably the subunit that cleaves target RNA. Cmr complex does not cleave ssDNA complementary to the crRNA. Cleavage of invading RNA is guided by the crRNA; substrate cleavage occurs a fixed distance (14 nt) from the 3' end of the crRNA. In vitro reconstitution shows Cmr1-2 and Cmr5 are not absolutely necessary for target cleavage. The protein is CRISPR system Cmr subunit Cmr6 of Pyrococcus furiosus (strain ATCC 43587 / DSM 3638 / JCM 8422 / Vc1).